Consider the following 154-residue polypeptide: Keratin-associated protein 9-9 (154 aa).

A run of 14 repeats spans residues Cys-8–Thr-12, Cys-13–Thr-17, Cys-18–Thr-22, Cys-37–Ser-41, Cys-42–Ser-46, Cys-51–Ala-55, Cys-56–Thr-60, Cys-61–Thr-65, Cys-66–Thr-70, Cys-75–Thr-79, Cys-124–Ala-128, Cys-129–Thr-133, Cys-134–Thr-137, and Cys-148–Ser-152. Residues Cys-8 to Ser-152 are 14 X 5 AA repeats of C-C-[RQVGE]-[SPSTNQ]-[TASL].

This sequence belongs to the KRTAP type 9 family. In terms of assembly, interacts with hair keratins.

In the hair cortex, hair keratin intermediate filaments are embedded in an interfilamentous matrix, consisting of hair keratin-associated proteins (KRTAP), which are essential for the formation of a rigid and resistant hair shaft through their extensive disulfide bond cross-linking with abundant cysteine residues of hair keratins. The matrix proteins include the high-sulfur and high-glycine-tyrosine keratins. The chain is Keratin-associated protein 9-9 (KRTAP9-9) from Homo sapiens (Human).